A 144-amino-acid polypeptide reads, in one-letter code: uncharacterized protein (144 aa).

It belongs to the mimivirus L885/R898 family.

This is an uncharacterized protein from Acanthamoeba polyphaga (Amoeba).